Consider the following 335-residue polypeptide: Phosphatidylglycerol--prolipoprotein diacylglyceryl transferase (335 aa).

The next 3 membrane-spanning stretches (helical) occupy residues 31-51 (IYWY…TYSL), 67-87 (YIFL…LAIG), and 100-120 (LAIQ…FPLI). Arg-163 serves as a coordination point for a 1,2-diacyl-sn-glycero-3-phospho-(1'-sn-glycerol). The next 3 helical transmembrane spans lie at 213–233 (PLFL…YFGL), 235–255 (YIKQ…YGVI), and 277–297 (SLLL…APIL).

This sequence belongs to the Lgt family.

The protein resides in the cell membrane. It carries out the reaction L-cysteinyl-[prolipoprotein] + a 1,2-diacyl-sn-glycero-3-phospho-(1'-sn-glycerol) = an S-1,2-diacyl-sn-glyceryl-L-cysteinyl-[prolipoprotein] + sn-glycerol 1-phosphate + H(+). It functions in the pathway protein modification; lipoprotein biosynthesis (diacylglyceryl transfer). Functionally, catalyzes the transfer of the diacylglyceryl group from phosphatidylglycerol to the sulfhydryl group of the N-terminal cysteine of a prolipoprotein, the first step in the formation of mature lipoproteins. The protein is Phosphatidylglycerol--prolipoprotein diacylglyceryl transferase of Ureaplasma urealyticum serovar 10 (strain ATCC 33699 / Western).